A 436-amino-acid polypeptide reads, in one-letter code: Trigger factor (436 aa).

The PPIase FKBP-type domain occupies 161 to 246 (EDQLNIDFVG…VNTVSEPKLP (86 aa)).

It belongs to the FKBP-type PPIase family. Tig subfamily.

It localises to the cytoplasm. It carries out the reaction [protein]-peptidylproline (omega=180) = [protein]-peptidylproline (omega=0). Functionally, involved in protein export. Acts as a chaperone by maintaining the newly synthesized protein in an open conformation. Functions as a peptidyl-prolyl cis-trans isomerase. This chain is Trigger factor, found in Pseudomonas syringae pv. syringae (strain B728a).